Here is a 530-residue protein sequence, read N- to C-terminus: [Pyruvate dehydrogenase [acetyl-transferring]]-phosphatase 2, mitochondrial (530 aa).

Residues 1–67 (MSSTASYRIF…FALRKAYRHT (67 aa)) constitute a mitochondrion transit peptide. Residues 107 to 518 (VLRFESNQLA…DDITVMVVFF (412 aa)) enclose the PPM-type phosphatase domain. Positions 142, 143, 413, and 509 each coordinate Mn(2+).

This sequence belongs to the PP2C family. Requires Mg(2+) as cofactor. Highly expressed in liver.

Its subcellular location is the mitochondrion. It carries out the reaction O-phospho-L-seryl-[pyruvate dehydrogenase E1 alpha subunit] + H2O = L-seryl-[pyruvate dehydrogenase E1 alpha subunit] + phosphate. Mg(2+)-dependent protein phosphatase. Phosphatase activity is increased in the presence of spermine, a naturally produced polyamine. Its function is as follows. Mitochondrial enzyme that catalyzes the dephosphorylation and concomitant reactivation of the alpha subunit of the E1 component of the pyruvate dehydrogenase complex (PDC), thereby stimulating the conversion of pyruvate into acetyl-CoA. Acts as a crucial regulator of T cell metabolism and function, with a particular focus on T-helper Th17. The polypeptide is [Pyruvate dehydrogenase [acetyl-transferring]]-phosphatase 2, mitochondrial (Pdp2) (Rattus norvegicus (Rat)).